A 212-amino-acid polypeptide reads, in one-letter code: Imidazole glycerol phosphate synthase subunit HisH (212 aa).

A Glutamine amidotransferase type-1 domain is found at 1–212 (MLAILDYKAG…YEYCKEVSDA (212 aa)). Cysteine 79 serves as the catalytic Nucleophile. Catalysis depends on residues histidine 187 and glutamate 189.

In terms of assembly, heterodimer of HisH and HisF.

It localises to the cytoplasm. It carries out the reaction 5-[(5-phospho-1-deoxy-D-ribulos-1-ylimino)methylamino]-1-(5-phospho-beta-D-ribosyl)imidazole-4-carboxamide + L-glutamine = D-erythro-1-(imidazol-4-yl)glycerol 3-phosphate + 5-amino-1-(5-phospho-beta-D-ribosyl)imidazole-4-carboxamide + L-glutamate + H(+). The catalysed reaction is L-glutamine + H2O = L-glutamate + NH4(+). The protein operates within amino-acid biosynthesis; L-histidine biosynthesis; L-histidine from 5-phospho-alpha-D-ribose 1-diphosphate: step 5/9. Its function is as follows. IGPS catalyzes the conversion of PRFAR and glutamine to IGP, AICAR and glutamate. The HisH subunit catalyzes the hydrolysis of glutamine to glutamate and ammonia as part of the synthesis of IGP and AICAR. The resulting ammonia molecule is channeled to the active site of HisF. This chain is Imidazole glycerol phosphate synthase subunit HisH, found in Maridesulfovibrio salexigens (strain ATCC 14822 / DSM 2638 / NCIMB 8403 / VKM B-1763) (Desulfovibrio salexigens).